Reading from the N-terminus, the 428-residue chain is Adenylosuccinate synthetase (428 aa).

GTP-binding positions include 12–18 (GDEGKGK) and 40–42 (GHT). D13 serves as the catalytic Proton acceptor. The Mg(2+) site is built by D13 and G40. Residues 13 to 16 (DEGK), 38 to 41 (NAGH), T128, R142, Q223, T238, and R302 contribute to the IMP site. Residue H41 is the Proton donor of the active site. 298-304 (VTTKRPR) is a binding site for substrate. GTP contacts are provided by residues R304, 330-332 (KLD), and 412-414 (GVG).

This sequence belongs to the adenylosuccinate synthetase family. In terms of assembly, homodimer. Requires Mg(2+) as cofactor.

Its subcellular location is the cytoplasm. It carries out the reaction IMP + L-aspartate + GTP = N(6)-(1,2-dicarboxyethyl)-AMP + GDP + phosphate + 2 H(+). It participates in purine metabolism; AMP biosynthesis via de novo pathway; AMP from IMP: step 1/2. Its function is as follows. Plays an important role in the de novo pathway of purine nucleotide biosynthesis. Catalyzes the first committed step in the biosynthesis of AMP from IMP. In Cutibacterium acnes (strain DSM 16379 / KPA171202) (Propionibacterium acnes), this protein is Adenylosuccinate synthetase.